The primary structure comprises 305 residues: Oxygen-dependent coproporphyrinogen-III oxidase (305 aa).

Ser-98 contributes to the substrate binding site. Residues His-102 and His-112 each contribute to the a divalent metal cation site. Residue His-112 is the Proton donor of the active site. A substrate-binding site is contributed by 114–116 (NVR). A divalent metal cation-binding residues include His-151 and His-181. Residues 246-281 (YVEFNLVYDRGTLFGLQSGGRTESILMSMPPLARWE) form an important for dimerization region. Residue 264–266 (GGR) coordinates substrate.

It belongs to the aerobic coproporphyrinogen-III oxidase family. In terms of assembly, homodimer. Requires a divalent metal cation as cofactor.

The protein resides in the cytoplasm. It catalyses the reaction coproporphyrinogen III + O2 + 2 H(+) = protoporphyrinogen IX + 2 CO2 + 2 H2O. It functions in the pathway porphyrin-containing compound metabolism; protoporphyrin-IX biosynthesis; protoporphyrinogen-IX from coproporphyrinogen-III (O2 route): step 1/1. Involved in the heme biosynthesis. Catalyzes the aerobic oxidative decarboxylation of propionate groups of rings A and B of coproporphyrinogen-III to yield the vinyl groups in protoporphyrinogen-IX. The chain is Oxygen-dependent coproporphyrinogen-III oxidase from Vibrio vulnificus (strain CMCP6).